A 321-amino-acid chain; its full sequence is Phospho-N-acetylmuramoyl-pentapeptide-transferase (321 aa).

The next 10 helical transmembrane spans lie at 1–21 (MIFV…PVLI), 50–70 (MGGL…IIFV), 76–96 (IILL…DDYI), 112–132 (FLAQ…FHLV), 140–160 (IPFT…IVFW), 176–196 (GLAT…SFVL), 200–220 (AIGI…PYNI), 225–245 (VFMG…ISIM), 250–270 (LSLI…MLQV), and 300–320 (VVTV…WIGV).

It belongs to the glycosyltransferase 4 family. MraY subfamily. Mg(2+) is required as a cofactor.

The protein localises to the cell membrane. It carries out the reaction UDP-N-acetyl-alpha-D-muramoyl-L-alanyl-gamma-D-glutamyl-L-lysyl-D-alanyl-D-alanine + di-trans,octa-cis-undecaprenyl phosphate = Mur2Ac(oyl-L-Ala-gamma-D-Glu-L-Lys-D-Ala-D-Ala)-di-trans,octa-cis-undecaprenyl diphosphate + UMP. It functions in the pathway cell wall biogenesis; peptidoglycan biosynthesis. Catalyzes the initial step of the lipid cycle reactions in the biosynthesis of the cell wall peptidoglycan: transfers peptidoglycan precursor phospho-MurNAc-pentapeptide from UDP-MurNAc-pentapeptide onto the lipid carrier undecaprenyl phosphate, yielding undecaprenyl-pyrophosphoryl-MurNAc-pentapeptide, known as lipid I. The protein is Phospho-N-acetylmuramoyl-pentapeptide-transferase of Staphylococcus aureus (strain Mu50 / ATCC 700699).